A 138-amino-acid chain; its full sequence is Small ribosomal subunit protein uS12 (138 aa).

D89 is modified (3-methylthioaspartic acid). Residues 107–138 (VSGRMQRRSKYGAKFPKTGTGKTKAVPTKNKK) are disordered.

Belongs to the universal ribosomal protein uS12 family. Part of the 30S ribosomal subunit. Contacts proteins S8 and S17. May interact with IF1 in the 30S initiation complex.

In terms of biological role, with S4 and S5 plays an important role in translational accuracy. Functionally, interacts with and stabilizes bases of the 16S rRNA that are involved in tRNA selection in the A site and with the mRNA backbone. Located at the interface of the 30S and 50S subunits, it traverses the body of the 30S subunit contacting proteins on the other side and probably holding the rRNA structure together. The combined cluster of proteins S8, S12 and S17 appears to hold together the shoulder and platform of the 30S subunit. The polypeptide is Small ribosomal subunit protein uS12 (Azobacteroides pseudotrichonymphae genomovar. CFP2).